The chain runs to 626 residues: Receptor-like protein 4 (626 aa).

A signal peptide spans methionine 1 to alanine 22. Topologically, residues arginine 23–lysine 549 are extracellular. 4 N-linked (GlcNAc...) asparagine glycosylation sites follow: asparagine 61, asparagine 282, asparagine 333, and asparagine 417. LRR repeat units lie at residues arginine 420–leucine 444, lysine 445–valine 468, serine 470–leucine 492, and threonine 493–arginine 516. N-linked (GlcNAc...) asparagine glycosylation is found at asparagine 451 and asparagine 482. N-linked (GlcNAc...) asparagine glycosylation is present at asparagine 524. A helical membrane pass occupies residues isoleucine 550–tryptophan 570. Over tryptophan 571–serine 626 the chain is Cytoplasmic. Residues methionine 603–serine 626 are disordered.

The protein belongs to the RLP family.

The protein localises to the cell membrane. The polypeptide is Receptor-like protein 4 (Arabidopsis thaliana (Mouse-ear cress)).